Reading from the N-terminus, the 451-residue chain is Heme sensor protein HssS (451 aa).

Transmembrane regions (helical) follow at residues 9 to 29 and 164 to 184; these read IAIYAITVILFSALMSFLFTN and IFLAVLITLLLIISISLVIAS. The region spanning 186–238 is the HAMP domain; the sequence is YSIIKPVTALKNATTRIMKGDFSTPIKQTRHDEIGTLQSRFNTMRQNLGQVDQ. Positions 246-451 constitute a Histidine kinase domain; that stretch reads NVSHEVKTPL…KTQFIVKLFI (206 aa). Histidine 249 is modified (phosphohistidine; by autocatalysis).

Autophosphorylated.

It is found in the cell membrane. It carries out the reaction ATP + protein L-histidine = ADP + protein N-phospho-L-histidine.. Member of the two-component regulatory system HssS/HssR involved in intracellular heme homeostasis and tempering of staphylococcal virulence. HssS functions as a heme sensor histidine kinase which is autophosphorylated at a histidine residue and transfers its phosphate group to an aspartate residue of HssR. HssR/HssS activates the expression of HrtAB, an efflux pump, in response to extracellular heme, hemin, hemoglobin or blood. The protein is Heme sensor protein HssS (hssS) of Staphylococcus epidermidis (strain ATCC 35984 / DSM 28319 / BCRC 17069 / CCUG 31568 / BM 3577 / RP62A).